A 159-amino-acid polypeptide reads, in one-letter code: 2-C-methyl-D-erythritol 2,4-cyclodiphosphate synthase (159 aa).

Residues Asp8 and His10 each contribute to the a divalent metal cation site. 4-CDP-2-C-methyl-D-erythritol 2-phosphate contacts are provided by residues 8 to 10 (DVH) and 34 to 35 (HS). His42 is an a divalent metal cation binding site. 4-CDP-2-C-methyl-D-erythritol 2-phosphate is bound by residues 56 to 58 (DIG), 61 to 65 (FPDTD), 100 to 106 (AQAPKML), 132 to 135 (TTTE), Phe139, and Arg142.

This sequence belongs to the IspF family. As to quaternary structure, homotrimer. It depends on a divalent metal cation as a cofactor.

It catalyses the reaction 4-CDP-2-C-methyl-D-erythritol 2-phosphate = 2-C-methyl-D-erythritol 2,4-cyclic diphosphate + CMP. It participates in isoprenoid biosynthesis; isopentenyl diphosphate biosynthesis via DXP pathway; isopentenyl diphosphate from 1-deoxy-D-xylulose 5-phosphate: step 4/6. Involved in the biosynthesis of isopentenyl diphosphate (IPP) and dimethylallyl diphosphate (DMAPP), two major building blocks of isoprenoid compounds. Catalyzes the conversion of 4-diphosphocytidyl-2-C-methyl-D-erythritol 2-phosphate (CDP-ME2P) to 2-C-methyl-D-erythritol 2,4-cyclodiphosphate (ME-CPP) with a corresponding release of cytidine 5-monophosphate (CMP). The polypeptide is 2-C-methyl-D-erythritol 2,4-cyclodiphosphate synthase (Escherichia coli O139:H28 (strain E24377A / ETEC)).